Reading from the N-terminus, the 240-residue chain is Uridylate kinase (240 aa).

12 to 15 (KLSG) lines the ATP pocket. The interval 20-25 (GKQGFG) is involved in allosteric activation by GTP. Glycine 54 contributes to the UMP binding site. Residues glycine 55 and arginine 59 each coordinate ATP. UMP contacts are provided by residues aspartate 74 and 135 to 142 (TGNPYFST). ATP contacts are provided by asparagine 163, tyrosine 169, and aspartate 172.

This sequence belongs to the UMP kinase family. As to quaternary structure, homohexamer.

It is found in the cytoplasm. It catalyses the reaction UMP + ATP = UDP + ADP. Its pathway is pyrimidine metabolism; CTP biosynthesis via de novo pathway; UDP from UMP (UMPK route): step 1/1. With respect to regulation, allosterically activated by GTP. Inhibited by UTP. Its function is as follows. Catalyzes the reversible phosphorylation of UMP to UDP. In Geobacillus kaustophilus (strain HTA426), this protein is Uridylate kinase.